A 450-amino-acid chain; its full sequence is Phosphoglucosamine mutase (450 aa).

Ser101 functions as the Phosphoserine intermediate in the catalytic mechanism. 4 residues coordinate Mg(2+): Ser101, Asp241, Asp243, and Asp245. Ser101 carries the phosphoserine modification.

The protein belongs to the phosphohexose mutase family. It depends on Mg(2+) as a cofactor. Post-translationally, activated by phosphorylation.

The catalysed reaction is alpha-D-glucosamine 1-phosphate = D-glucosamine 6-phosphate. Its function is as follows. Catalyzes the conversion of glucosamine-6-phosphate to glucosamine-1-phosphate. The sequence is that of Phosphoglucosamine mutase from Listeria welshimeri serovar 6b (strain ATCC 35897 / DSM 20650 / CCUG 15529 / CIP 8149 / NCTC 11857 / SLCC 5334 / V8).